A 392-amino-acid polypeptide reads, in one-letter code: Phosphopentomutase (392 aa).

6 residues coordinate Mn(2+): D15, D287, H292, D328, H329, and H340.

It belongs to the phosphopentomutase family. The cofactor is Mn(2+).

It is found in the cytoplasm. The enzyme catalyses 2-deoxy-alpha-D-ribose 1-phosphate = 2-deoxy-D-ribose 5-phosphate. The catalysed reaction is alpha-D-ribose 1-phosphate = D-ribose 5-phosphate. It participates in carbohydrate degradation; 2-deoxy-D-ribose 1-phosphate degradation; D-glyceraldehyde 3-phosphate and acetaldehyde from 2-deoxy-alpha-D-ribose 1-phosphate: step 1/2. Its function is as follows. Isomerase that catalyzes the conversion of deoxy-ribose 1-phosphate (dRib-1-P) and ribose 1-phosphate (Rib-1-P) to deoxy-ribose 5-phosphate (dRib-5-P) and ribose 5-phosphate (Rib-5-P), respectively. This is Phosphopentomutase from Syntrophotalea carbinolica (strain DSM 2380 / NBRC 103641 / GraBd1) (Pelobacter carbinolicus).